The chain runs to 60 residues: Mannitol-specific phosphotransferase enzyme IIA component (60 aa).

In terms of domain architecture, PTS EIIA type-2 spans 2 to 60; sequence SELFSNDNIFLNVNVNSQNEAIEKAGKALVDSGAVTDAYIQVVSTFMGNGLAIPHGTDD. His-56 serves as the catalytic Tele-phosphohistidine intermediate. His-56 is subject to Phosphohistidine; by HPr.

As to quaternary structure, homodimer or homotrimer. Seems to be a monomer when not phosphorylated.

Its subcellular location is the cytoplasm. In terms of biological role, the phosphoenolpyruvate-dependent sugar phosphotransferase system (sugar PTS), a major carbohydrate active transport system, catalyzes the phosphorylation of incoming sugar substrates concomitantly with their translocation across the cell membrane. The enzyme II CmtAB PTS system is involved in D-mannitol transport. The protein is Mannitol-specific phosphotransferase enzyme IIA component of Staphylococcus aureus.